Reading from the N-terminus, the 573-residue chain is MTGLSRERYAALYGPTTGDRIRLADTDLVIEITEDRSGGTGLAGDEAVFGGGKVLRESMGQSRATRADGAPDTVITGAVILDHWGIIKADIGIRDGRIVAIGKAGNPDIMDGVHPDLVVGPSTEIIAGNGRILTAGAIDCHVHLICPQIMEEALGGGITTIVAGGTGPAEGSKATTVTPGAWHLARMLEALDTWPLNVVLLGKGNTVSAEAMWEQLRGGAAGFKLHEDWGTTPAAIDACLTVADAAGVQVNIHTDTLNEMAFVEDTLAAIKGRSIHAYHTEGAGGGHAPDIITVASHPNVLPSSTNPTRPHTVNTLDEHLDMLMVCHHLNPSVPEDLAFAESRIRPSTIAAEDLLHDIGAISMIGSDAQAMGRIGEVVLRTWQTAHVMKRRRGALEGDGRADNNRARRYVAKYTICPAVAHGLDGEIGSVEVGKLADLVLWEPAFFGVRPHAVIKGGMIAWAAMGDANASIPTPQPVLPRPMFGAAPAAAAATSVHFVSPQAIEDGLADRIDVRRSLIAVADCRHVGKAQMPLNDAMPRIEVDPDTFTVRIDGDVWQEQPAAELPMAQRYFLF.

The Urease domain maps to Gly-136–Phe-573. The Ni(2+) site is built by His-141, His-143, and Lys-224. Lys-224 is modified (N6-carboxylysine). His-226 contacts substrate. The Ni(2+) site is built by His-253 and His-279. Catalysis depends on His-327, which acts as the Proton donor. Ni(2+) is bound at residue Asp-367.

The protein belongs to the metallo-dependent hydrolases superfamily. Urease alpha subunit family. Heterotrimer of UreA (gamma), UreB (beta) and UreC (alpha) subunits. Three heterotrimers associate to form the active enzyme. It depends on Ni cation as a cofactor. Carboxylation allows a single lysine to coordinate two nickel ions.

Its subcellular location is the cytoplasm. It catalyses the reaction urea + 2 H2O + H(+) = hydrogencarbonate + 2 NH4(+). It functions in the pathway nitrogen metabolism; urea degradation; CO(2) and NH(3) from urea (urease route): step 1/1. This chain is Urease subunit alpha, found in Mycobacterium sp. (strain JLS).